Here is a 387-residue protein sequence, read N- to C-terminus: Succinate--CoA ligase [ADP-forming] subunit beta (387 aa).

The 237-residue stretch at 9-245 (KDLLESYGLK…KSQENAKELK (237 aa)) folds into the ATP-grasp domain. Residues lysine 46, 53–55 (GRG), glutamate 100, tyrosine 103, and glutamate 108 each bind ATP. Residues asparagine 200 and aspartate 214 each contribute to the Mg(2+) site. Residues asparagine 265 and 322–324 (GIV) contribute to the substrate site.

Belongs to the succinate/malate CoA ligase beta subunit family. As to quaternary structure, heterotetramer of two alpha and two beta subunits. Mg(2+) serves as cofactor.

It catalyses the reaction succinate + ATP + CoA = succinyl-CoA + ADP + phosphate. It carries out the reaction GTP + succinate + CoA = succinyl-CoA + GDP + phosphate. It participates in carbohydrate metabolism; tricarboxylic acid cycle; succinate from succinyl-CoA (ligase route): step 1/1. Functionally, succinyl-CoA synthetase functions in the citric acid cycle (TCA), coupling the hydrolysis of succinyl-CoA to the synthesis of either ATP or GTP and thus represents the only step of substrate-level phosphorylation in the TCA. The beta subunit provides nucleotide specificity of the enzyme and binds the substrate succinate, while the binding sites for coenzyme A and phosphate are found in the alpha subunit. In Francisella tularensis subsp. holarctica (strain FTNF002-00 / FTA), this protein is Succinate--CoA ligase [ADP-forming] subunit beta.